The sequence spans 118 residues: Putative pterin-4-alpha-carbinolamine dehydratase (118 aa).

This sequence belongs to the pterin-4-alpha-carbinolamine dehydratase family.

The catalysed reaction is (4aS,6R)-4a-hydroxy-L-erythro-5,6,7,8-tetrahydrobiopterin = (6R)-L-erythro-6,7-dihydrobiopterin + H2O. The chain is Putative pterin-4-alpha-carbinolamine dehydratase from Stutzerimonas stutzeri (strain A1501) (Pseudomonas stutzeri).